We begin with the raw amino-acid sequence, 761 residues long: Mitochondrial intermediate peptidase 1 (761 aa).

Residue H530 coordinates Zn(2+). The active site involves E531. The Zn(2+) site is built by H534 and H537.

This sequence belongs to the peptidase M3 family. Zn(2+) is required as a cofactor.

The protein localises to the mitochondrion matrix. The catalysed reaction is Release of an N-terminal octapeptide as second stage of processing of some proteins imported into the mitochondrion.. Its function is as follows. Cleaves proteins, imported into the mitochondrion, to their mature size. While most mitochondrial precursor proteins are processed to the mature form in one step by mitochondrial processing peptidase (MPP), the sequential cleavage by MIP of an octapeptide after initial processing by MPP is a required step for a subgroup of nuclear-encoded precursor proteins destined for the matrix or the inner membrane. The protein is Mitochondrial intermediate peptidase 1 (OCT1) of Cryptococcus neoformans var. neoformans serotype D (strain B-3501A) (Filobasidiella neoformans).